The following is a 237-amino-acid chain: Purine nucleoside phosphorylase DeoD-type (237 aa).

His-4 contacts a purine D-ribonucleoside. Residues Gly-20, Arg-24, Arg-43, and Arg-87–Thr-90 contribute to the phosphate site. A purine D-ribonucleoside-binding positions include Glu-180–Glu-182 and Ser-204–Asp-205. Asp-205 acts as the Proton donor in catalysis.

This sequence belongs to the PNP/UDP phosphorylase family. As to quaternary structure, homohexamer; trimer of homodimers.

It carries out the reaction a purine D-ribonucleoside + phosphate = a purine nucleobase + alpha-D-ribose 1-phosphate. The catalysed reaction is a purine 2'-deoxy-D-ribonucleoside + phosphate = a purine nucleobase + 2-deoxy-alpha-D-ribose 1-phosphate. In terms of biological role, catalyzes the reversible phosphorolytic breakdown of the N-glycosidic bond in the beta-(deoxy)ribonucleoside molecules, with the formation of the corresponding free purine bases and pentose-1-phosphate. The chain is Purine nucleoside phosphorylase DeoD-type from Streptococcus suis (strain 98HAH33).